The following is a 96-amino-acid chain: Small ribosomal subunit protein bS18 (96 aa).

This sequence belongs to the bacterial ribosomal protein bS18 family. Part of the 30S ribosomal subunit. Forms a tight heterodimer with protein bS6.

Functionally, binds as a heterodimer with protein bS6 to the central domain of the 16S rRNA, where it helps stabilize the platform of the 30S subunit. This is Small ribosomal subunit protein bS18 from Borrelia garinii subsp. bavariensis (strain ATCC BAA-2496 / DSM 23469 / PBi) (Borreliella bavariensis).